The chain runs to 520 residues: FNIP repeat-containing protein DDB_G0274063/DDB_G0272642 (520 aa).

2 disordered regions span residues 47–86 (QQQSNNNNNNNNNNNNNNNNNNFINFSNHTNNINNNIDNR) and 100–121 (NISSSSPYTLTSTPSSSSSSSS). A compositionally biased stretch (low complexity) spans 51 to 84 (NNNNNNNNNNNNNNNNNNFINFSNHTNNINNNID). 4 FNIP repeats span residues 242-285 (YNNN…FGES), 286-331 (FNQD…FGLS), 332-406 (YNQP…FGVQ), and 453-496 (FNQQ…FHNS).

This chain is FNIP repeat-containing protein DDB_G0274063/DDB_G0272642, found in Dictyostelium discoideum (Social amoeba).